Here is a 367-residue protein sequence, read N- to C-terminus: Flagellar P-ring protein (367 aa).

The first 22 residues, 1 to 22 (MRRMLVIRWILAIHLIATQVFA), serve as a signal peptide directing secretion.

This sequence belongs to the FlgI family. As to quaternary structure, the basal body constitutes a major portion of the flagellar organelle and consists of four rings (L,P,S, and M) mounted on a central rod.

It localises to the periplasm. The protein localises to the bacterial flagellum basal body. Assembles around the rod to form the L-ring and probably protects the motor/basal body from shearing forces during rotation. The chain is Flagellar P-ring protein from Legionella pneumophila subsp. pneumophila (strain Philadelphia 1 / ATCC 33152 / DSM 7513).